A 326-amino-acid polypeptide reads, in one-letter code: Transmembrane protein 171 (326 aa).

Transmembrane regions (helical) follow at residues 22-42 (IFFL…LSIF), 57-77 (MMLK…VILA), 114-134 (LIFG…GIWV), and 161-181 (FLSL…FFVV). The interval 229–326 (FPESSASAAA…LSPSSEPSPP (98 aa)) is disordered. Positions 230–240 (PESSASAAARS) are enriched in low complexity. Positions 257 to 266 (SIFQSGSPTP) are enriched in polar residues. Composition is skewed to low complexity over residues 288–302 (SSSE…LSEL) and 312–326 (ATTT…PSPP).

The protein localises to the membrane. The sequence is that of Transmembrane protein 171 (TMEM171) from Bos taurus (Bovine).